A 143-amino-acid chain; its full sequence is Hemoglobin subunit alpha-1 (143 aa).

The residue at position 2 (S2) is an N-acetylserine. Residues 2 to 143 (SLTEKDKAAV…VSLALAERYR (142 aa)) enclose the Globin domain. H60 is a binding site for O2. Heme b is bound at residue H89.

The protein belongs to the globin family. Hb 1 is a heterotetramer of two alpha-1 and two beta chains. Red blood cells.

In terms of biological role, involved in oxygen transport from gills to the various peripheral tissues. The chain is Hemoglobin subunit alpha-1 (hba1) from Cottoperca gobio (Frogmouth).